A 1077-amino-acid chain; its full sequence is Adenylate cyclase type 4 (1077 aa).

At 1-28 the chain is on the cytoplasmic side; it reads MARLFSPRPPPSEDLFYETYYSLSQQYP. 6 consecutive transmembrane segments (helical) span residues 29-50, 61-80, 94-117, 120-138, 141-162, and 170-190; these read LLLLLLGIVLCALAALLAVAWA, FLTTVLCALGGFSLLLGLAS, GLVWVALLALGHAFLFTGGVVSAW, VSYFLFVIFTAYAMLPLGM, AAVAGLASSLSHLLVLGLYLGP, and LLPQLAANAVLFLCGNVAGVY. Residues 191–585 lie on the Cytoplasmic side of the membrane; the sequence is HKALMERALR…YRLSAIPAFK (395 aa). 3 residues coordinate Mg(2+): Asp278, Ile279, and Asp322. Residues 278 to 283, 320 to 322, and Arg366 contribute to the ATP site; these read DIVGFT and LGD. At Ser520 the chain carries Phosphoserine. The residue at position 536 (Thr536) is a Phosphothreonine. The next 3 membrane-spanning stretches (helical) occupy residues 586 to 607, 611 to 633, and 664 to 687; these read YYEACTFLVFLSNFIIQMLVTN, ALAITYSITFLLFLLILFVCFSE, and IALGTATILLVFAMAITSLFFFPT. At 688 to 714 the chain is on the extracellular side; it reads SSDCPFQAPNVSSMISNLSWELPGSLP. Asn697 and Asn704 each carry an N-linked (GlcNAc...) asparagine glycan. 3 helical membrane passes run 715-736, 744-764, and 791-807; these read LISVPYSMHCCTLGFLSCSLFL, LLLLLLWLAASCSLFLHSHAW, and MGAISFFIFFFTLLVLA. The Cytoplasmic portion of the chain corresponds to 808–1077; that stretch reads RQNEYYCRLD…RTGPPSATLG (270 aa). ATP is bound by residues Lys925, 1005 to 1007, 1012 to 1016, and Lys1052; these read DIW and NVASR.

The protein belongs to the adenylyl cyclase class-4/guanylyl cyclase family. It depends on Mg(2+) as a cofactor. Mn(2+) is required as a cofactor. As to expression, detected in the zona glomerulosa and the zona fasciculata in the adrenal gland (at protein level).

Its subcellular location is the cell membrane. It localises to the cytoplasm. It carries out the reaction ATP = 3',5'-cyclic AMP + diphosphate. Its activity is regulated as follows. Activated by forskolin. Insensitive to calcium/calmodulin. Stimulated by GNAS and by the G-protein beta and gamma subunit complex. Catalyzes the formation of the signaling molecule cAMP in response to G-protein signaling. The protein is Adenylate cyclase type 4 (ADCY4) of Homo sapiens (Human).